A 291-amino-acid polypeptide reads, in one-letter code: Protease HtpX homolog (291 aa).

The next 2 helical transmembrane spans lie at 4–24 (VVLFLLTNLAVMLVLSVSARI) and 38–58 (MGMLLVFAALIGFGGSFISLL). His144 is a binding site for Zn(2+). Glu145 is an active-site residue. His148 lines the Zn(2+) pocket. 2 consecutive transmembrane segments (helical) span residues 152-172 (GDMVTLTLIQGVVNTFVIFLS) and 199-219 (ISSIAFEIMFGILASVVVMCF). Glu224 is a Zn(2+) binding site.

Belongs to the peptidase M48B family. It depends on Zn(2+) as a cofactor.

It is found in the cell inner membrane. This is Protease HtpX homolog from Chlorobium limicola (strain DSM 245 / NBRC 103803 / 6330).